The primary structure comprises 681 residues: Peroxisomal acyl-coenzyme A oxidase 2 (681 aa).

Ser-3 and Ser-9 each carry phosphoserine. N6-succinyllysine is present on residues Lys-66, Lys-137, Lys-303, Lys-453, Lys-561, and Lys-667. The Microbody targeting signal signature appears at 679-681 (HKM).

It belongs to the acyl-CoA oxidase family. Homodimer. Requires FAD as cofactor. In terms of tissue distribution, most abundant in liver. Also expressed in kidney. Not present in any other tissues tested.

It localises to the peroxisome. The catalysed reaction is (25R)-3alpha,7alpha,12alpha-trihydroxy-5beta-cholestan-26-oyl-CoA + A + H2O = (24R,25R)-3alpha,7alpha,12alpha,24-tetrahydroxy-5beta-cholestan-26-oyl-CoA + AH2. The enzyme catalyses (25S)-3alpha,7alpha,12alpha-trihydroxy-5beta-cholestan-26-oyl-CoA + O2 = (24E)-3alpha,7alpha,12alpha-trihydroxy-5beta-cholest-24-en-26-oyl-CoA + H2O2. Oxidizes the CoA esters of the bile acid intermediates di- and tri-hydroxycoprostanic acids. Capable of oxidizing short as well as long chain 2-methyl branched fatty acids. In Rattus norvegicus (Rat), this protein is Peroxisomal acyl-coenzyme A oxidase 2.